We begin with the raw amino-acid sequence, 480 residues long: UDP-N-acetylmuramoylalanine--D-glutamate ligase (480 aa).

127–133 (GTNGKTT) lines the ATP pocket.

The protein belongs to the MurCDEF family.

Its subcellular location is the cytoplasm. It carries out the reaction UDP-N-acetyl-alpha-D-muramoyl-L-alanine + D-glutamate + ATP = UDP-N-acetyl-alpha-D-muramoyl-L-alanyl-D-glutamate + ADP + phosphate + H(+). It participates in cell wall biogenesis; peptidoglycan biosynthesis. Functionally, cell wall formation. Catalyzes the addition of glutamate to the nucleotide precursor UDP-N-acetylmuramoyl-L-alanine (UMA). In Tropheryma whipplei (strain TW08/27) (Whipple's bacillus), this protein is UDP-N-acetylmuramoylalanine--D-glutamate ligase.